Here is a 183-residue protein sequence, read N- to C-terminus: A-type ATP synthase subunit E (183 aa).

This sequence belongs to the V-ATPase E subunit family. Has multiple subunits with at least A(3), B(3), C, D, E, F, H, I and proteolipid K(x).

Its subcellular location is the cell membrane. Its function is as follows. Component of the A-type ATP synthase that produces ATP from ADP in the presence of a proton gradient across the membrane. The protein is A-type ATP synthase subunit E of Methanococcoides burtonii (strain DSM 6242 / NBRC 107633 / OCM 468 / ACE-M).